Reading from the N-terminus, the 134-residue chain is UPF0412 protein YaaI (134 aa).

Positions 1-23 (MRSVLTISVGLLFGLALSSVAHA) are cleaved as a signal peptide.

The protein belongs to the UPF0412 family.

The chain is UPF0412 protein YaaI from Salmonella typhimurium (strain LT2 / SGSC1412 / ATCC 700720).